Consider the following 240-residue polypeptide: Probable transcriptional regulatory protein Adeh_2184 (240 aa).

Belongs to the TACO1 family.

The protein resides in the cytoplasm. This chain is Probable transcriptional regulatory protein Adeh_2184, found in Anaeromyxobacter dehalogenans (strain 2CP-C).